Here is a 784-residue protein sequence, read N- to C-terminus: Toll-like receptor 2 (784 aa).

Residues 1–20 (MPHTLWMVWVLGVIISLSKE) form the signal peptide. Residues 21–587 (ESSNQASLSC…VRLSVSECHR (567 aa)) lie on the Extracellular side of the membrane. A disulfide bridge connects residues C30 and C36. LRR repeat units lie at residues 54-77 (VKCLDLSNNRITYISNSDLQRYVN), 78-101 (LQALVLTSNGINTIEEDSFSSLGR), 102-125 (LEHLDLSYNYLSNLSSSWFKPLSS), 126-150 (LKFLNLLGNPYKTLGETSLFSHLTK), 151-175 (LRILRVGNMDTFTKIQRKDFAGLTF), 176-199 (LEELEIDASDLQSYEPKSLKSIQN), 200-223 (VSHLILHMKQHILLLEIFVDLTSS), 224-250 (VECLELRDTDLNTFHFSELSTGETNSL), 251-278 (IKKFTFRNVKITDESLFQVMKLLSQISG), 279-308 (LLELEFDDCTLNGVGDFRGSDNDRVIDPGK), 309-337 (VETLTIRRLHIPQFYSFNDLSTLYPLTER), 338-361 (VKRITVENSKVFLVPCLLSRHLKS), 362-388 (LEYLDLSENLMVEEYLKNSACEDAWPS), 389-414 (LQTLILRQNHLASLGKIGETLLTLKN), 415-437 (LTNLDISKNTFHYMPETCQWPEK), 438-457 (MKYLNLSSTRIHSVTGCIPK), 458-478 (TLEILDISNNNLNLFSLNLPQ), 479-500 (LKELYISRNKLMTLPDASLLPM), and 501-524 (LLVLKISRNTITTFSKEQLDSFHT). N114 is a glycosylation site (N-linked (GlcNAc...) asparagine). Residue N199 is glycosylated (N-linked (GlcNAc...) asparagine). A disulfide bridge connects residues C353 and C382. N-linked (GlcNAc...) asparagine glycosylation is present at N414. C432 and C454 are oxidised to a cystine. N442 carries N-linked (GlcNAc...) asparagine glycosylation. An LRRCT domain is found at 525–579 (LKTLEAGGNNFICSCEFLSFTQEQQALAKVLVDWPANYLCDSPSHVRGQRVQDVR). The helical transmembrane segment at 588–608 (AALVSGMCCALFLLILLMGVL) threads the bilayer. The Cytoplasmic segment spans residues 609 to 784 (CHRFHGLWYM…WVNLRAAIKS (176 aa)). A TIR domain is found at 639 to 782 (ICYDAFVSYS…GFWVNLRAAI (144 aa)). A Glycyl lysine isopeptide (Lys-Gly) (interchain with G-Cter in ubiquitin) cross-link involves residue K754. The ATG16L1-binding motif motif lies at 761-778 (YLEWPMDEARQEGFWVNL).

It belongs to the Toll-like receptor family. Interacts with LY96, TLR1 and TLR6 (via extracellular domain). TLR2 seems to exist in heterodimers with either TLR1 or TLR6 before stimulation by the ligand. The heterodimers form bigger oligomers in response to their corresponding ligands as well as further heterotypic associations with other receptors such as CD14 and/or CD36. Binds MYD88 (via TIR domain). Interacts with TICAM1. Interacts with CNPY3. Interacts with ATG16L1. Interacts with PPP1R11. Interacts with TICAM2. Interacts with TIRAP. Ubiquitinated at Lys-754 by PPP1R11, leading to its degradation. Deubiquitinated by USP2. In terms of processing, glycosylation of Asn-442 is critical for secretion of the N-terminal ectodomain of TLR2.

Its subcellular location is the membrane. The protein resides in the cytoplasmic vesicle. The protein localises to the phagosome membrane. It is found in the membrane raft. Functionally, cooperates with LY96 to mediate the innate immune response to bacterial lipoproteins and other microbial cell wall components. Cooperates with TLR1 or TLR6 to mediate the innate immune response to bacterial lipoproteins or lipopeptides. Acts via MYD88 and TRAF6, leading to NF-kappa-B activation, cytokine secretion and the inflammatory response. May also promote apoptosis in response to lipoproteins. Forms activation clusters composed of several receptors depending on the ligand, these clusters trigger signaling from the cell surface and subsequently are targeted to the Golgi in a lipid-raft dependent pathway. Forms the cluster TLR2:TLR6:CD14:CD36 in response to diacylated lipopeptides and TLR2:TLR1:CD14 in response to triacylated lipopeptides. In Macaca mulatta (Rhesus macaque), this protein is Toll-like receptor 2 (TLR2).